The primary structure comprises 89 residues: Small ribosomal subunit protein uS15 (89 aa).

This sequence belongs to the universal ribosomal protein uS15 family. As to quaternary structure, part of the 30S ribosomal subunit. Forms a bridge to the 50S subunit in the 70S ribosome, contacting the 23S rRNA.

Its function is as follows. One of the primary rRNA binding proteins, it binds directly to 16S rRNA where it helps nucleate assembly of the platform of the 30S subunit by binding and bridging several RNA helices of the 16S rRNA. Functionally, forms an intersubunit bridge (bridge B4) with the 23S rRNA of the 50S subunit in the ribosome. This chain is Small ribosomal subunit protein uS15, found in Cyanothece sp. (strain PCC 7425 / ATCC 29141).